Consider the following 915-residue polypeptide: MIGKLIKKIFGSKNERELKRMGKVVTLINALEPELQKLSDEQLKEKTTELRNRYSAGETLDQLLPEAFAVVREAGRRVLGMRHFDVQLIGGMTLHEGRIAEMRTGEGKTLVSTLPAYLHALAGKGVHVVTVNDYLASRDANWMRPLYEALGMSVGVIQSMQPAVLKRQAYASDITYGTNNEYGFDYLRDNMALSKQDKVQRPLNYAIIDEVDSILIDEARTPLIISGAAENSAEMYKRVNQLVTKLTRQIDNGEDGDRRVISVAGDFTVDEKSRQVELTEGGHQHVEELLIKANLLAPDQNLYAANNLTLLHHVNSALRAHALFHRDIEYIVQEGQVVLIDEHTGRTMPGRRLSEGLHQAIEAKESVEIQSESQTLASTTFQNYFRLYPTLAGMTGTADTEAYEFREIYGLDVVVIPTNRPIQRIDMNDKVYLSLEEKYAAIVEDVKAFSANNAPVLVGTASIETSEEMSRRLTSAGIKHQVLNAKFHAQEAEIIAQAGRPGTVTIATNMAGRGTDIVLGGRWESEVEKLENATPEQIDAIKAEWEKRHDIVLAAGGLHIVGTERHESRRIDNQLRGRAGRQGDPGVTRFYLSLEDNLMRIFASDRMRNFMQALGMEKGEAIEHRMVNNAIENAQRKVEGRNFDIRKQLLEFDDVANDQRQIVYHQRNELLDAENIRDTITVVRADVLNDVVSQYIPPQSIEDMWDIAGLEKQLEVDFGLRLSIAKWLEEDTRLHEEPLRKRILDEVQATYDAKCERIGEIMLEIEKQVMLQVLDNSWKEHLAAMDHLRQGINLRSYAQRNPKQEYKRESFELFQQLLQRVKHETIHLLARVEPITREQMEAMEIQRREELARQKMQMRHEQLSAMPESPEAESEPAAAPQRQAPVVREGRKVGRNDPCPCGSGKKYKNCHGQLE.

ATP is bound by residues glutamine 87, 105 to 109 (GEGKT), and aspartate 516. Residues 854-915 (QKMQMRHEQL…KYKNCHGQLE (62 aa)) are disordered. Zn(2+) contacts are provided by cysteine 899, cysteine 901, cysteine 910, and histidine 911.

It belongs to the SecA family. As to quaternary structure, monomer and homodimer. Part of the essential Sec protein translocation apparatus which comprises SecA, SecYEG and auxiliary proteins SecDF-YajC and YidC. Zn(2+) serves as cofactor.

It is found in the cell inner membrane. It localises to the cytoplasm. The enzyme catalyses ATP + H2O + cellular proteinSide 1 = ADP + phosphate + cellular proteinSide 2.. Its function is as follows. Part of the Sec protein translocase complex. Interacts with the SecYEG preprotein conducting channel. Has a central role in coupling the hydrolysis of ATP to the transfer of proteins into and across the cell membrane, serving both as a receptor for the preprotein-SecB complex and as an ATP-driven molecular motor driving the stepwise translocation of polypeptide chains across the membrane. The chain is Protein translocase subunit SecA from Cellvibrio japonicus (strain Ueda107) (Pseudomonas fluorescens subsp. cellulosa).